The following is a 203-amino-acid chain: IQ domain-containing protein F3 (203 aa).

A compositionally biased stretch (basic and acidic residues) spans methionine 1–proline 12. The tract at residues methionine 1–glutamate 111 is disordered. The stretch at glutamate 13–serine 82 forms a coiled coil. A compositionally biased stretch (acidic residues) spans aspartate 29–glutamate 38. The segment covering alanine 39 to lysine 51 has biased composition (basic and acidic residues). Acidic residues predominate over residues aspartate 64–glutamate 73. Basic and acidic residues-rich tracts occupy residues alanine 74–lysine 86 and glutamine 96–glutamate 111. The 30-residue stretch at valine 129–threonine 158 folds into the IQ domain.

This Mus musculus (Mouse) protein is IQ domain-containing protein F3 (Iqcf3).